The primary structure comprises 554 residues: MIEPHAPAPPGSPPSWGGPCGPEAPARLPVRPAVGRFLVLAGVFVCAACGLVYELELVALASYLIGDSVTQASVVLSVMVFAMGLGSLAAKRLRGLAAAGFGALEAALALVGGSSAMLLYAVFAWTGGWGGLWADGPRILLVAFSLAIGVLIGAEVPLLMELIQRVRRQDPGGAVADLFAADYVGALVGGLAFPFVLLPFLGQLTGALLTGTVNAVVGAALVLGLFRRDLTRRARWLLLTANAVVLALLATATVLADDFERAARHAVYGQDVRVAVRTGVQEVVLTGDADGRPLDLFLDGRLRVRGSDERSYHEALVHPAMGGPHARVLILGGGDGLAAREVLRHPGVRRVDVLEADPGLARLARHDPGLSTLNEHAYGDARVRVLSGDAFHRLRATPSATYDVVISDLPDPGVTASTKLYSQEFYGLLRRVLAPDGRLAVHAGPVDARPRAFWTVDATLRAAGLPAVAYRVGARDTGPGPGSVPGPRRAAAGPPAPRGWGFLLAARTAPAPRLDPAAPRPHSLTPDSLARGVREAARTQMAGLPPSTLVHPRF.

The segment covering 1-13 has biased composition (pro residues); the sequence is MIEPHAPAPPGSP. The segment at 1-20 is disordered; it reads MIEPHAPAPPGSPPSWGGPC. 6 consecutive transmembrane segments (helical) span residues 37–57, 69–89, 106–126, 139–159, 184–204, and 206–226; these read FLVL…ELEL, VTQA…GSLA, AALA…FAWT, ILLV…VPLL, VGAL…LGQL, and GALL…LGLF. The tract at residues 235 to 516 is spermidine synthase; the sequence is RWLLLTANAV…RTAPAPRLDP (282 aa). The region spanning 247 to 492 is the PABS domain; sequence ALLATATVLA…SVPGPRRAAA (246 aa). Residue Gln281 coordinates S-methyl-5'-thioadenosine. Positions 313 and 335 each coordinate spermidine. Residues Glu355 and 389–390 each bind S-methyl-5'-thioadenosine; that span reads DA. The active-site Proton acceptor is Asp408. The interval 476–495 is disordered; sequence DTGPGPGSVPGPRRAAAGPP. The span at 485–495 shows a compositional bias: low complexity; it reads PGPRRAAAGPP.

This sequence belongs to the spermidine/spermine synthase family. Homodimer or homotetramer.

Its subcellular location is the cell membrane. It carries out the reaction S-adenosyl 3-(methylsulfanyl)propylamine + putrescine = S-methyl-5'-thioadenosine + spermidine + H(+). Its pathway is amine and polyamine biosynthesis; spermidine biosynthesis; spermidine from putrescine: step 1/1. Catalyzes the irreversible transfer of a propylamine group from the amino donor S-adenosylmethioninamine (decarboxy-AdoMet) to putrescine (1,4-diaminobutane) to yield spermidine. This Streptomyces coelicolor (strain ATCC BAA-471 / A3(2) / M145) protein is Polyamine aminopropyltransferase 2.